A 331-amino-acid polypeptide reads, in one-letter code: Neuropeptides B/W receptor type 1 (331 aa).

At 1–43 the chain is on the extracellular side; the sequence is MHNASYWGPERANTSCPAPAPTLGCPNASGPAPPLPPPLAVAV. N-linked (GlcNAc...) asparagine glycosylation is found at asparagine 3, asparagine 13, and asparagine 27. A helical transmembrane segment spans residues 44-66; it reads PVVYAVICAVGLAGNSAVLFVLL. Topologically, residues 67–75 are cytoplasmic; it reads RAPRRKTVT. Residues 76-100 form a helical membrane-spanning segment; that stretch reads NLFILNLAVADELFTLVPPVNIADF. Residues 101–115 lie on the Extracellular side of the membrane; the sequence is LLRRWPFGELLCKLV. Residues cysteine 112 and cysteine 191 are joined by a disulfide bond. Residues 116-135 traverse the membrane as a helical segment; the sequence is VAVDQYNTFSSLYFLTVMSA. Topologically, residues 136 to 160 are cytoplasmic; sequence DRYLVVLATAESRRVAGRTYGAARA. A helical transmembrane segment spans residues 161-180; it reads VSLAVWGVATLVVLPFAVFA. Over 181-205 the chain is Extracellular; it reads RLDEEQGRRQCVLVFPQPEALWWRA. The chain crosses the membrane as a helical span at residues 206-227; it reads SRLYTLVLGFAIPVSTICVLYT. At 228 to 251 the chain is on the cytoplasmic side; it reads SLLCRLRAIRLDSHAKALDRAKKR. The chain crosses the membrane as a helical span at residues 252-276; it reads VTVLVVAILAVCLLVWTPYHLSTVV. The Extracellular segment spans residues 277-286; sequence ALTTDLPQTP. A helical transmembrane segment spans residues 287–301; the sequence is LVIAVSYFITSLSYA. The Cytoplasmic segment spans residues 302–331; sequence NSCLNPFLYAFLDDSFRRSLRQLLACRTTS.

This sequence belongs to the G-protein coupled receptor 1 family.

It localises to the cell membrane. Its function is as follows. Interacts specifically with a number of opioid ligands. Receptor for neuropeptides B and W, which may be involved in neuroendocrine system regulation, food intake and the organization of other signals. The sequence is that of Neuropeptides B/W receptor type 1 (NPBWR1) from Bos taurus (Bovine).